Here is a 123-residue protein sequence, read N- to C-terminus: Translation initiation factor 1A (123 aa).

The span at 1 to 11 (MSPDKTEDEDK) shows a compositional bias: acidic residues. Residues 1-26 (MSPDKTEDEDKDVNVDQDQFNEEEES) form a disordered region. Residues 28–102 (GRVILPNKKK…EKADVVYRYT (75 aa)) form the S1-like domain.

The protein belongs to the eIF-1A family.

Its function is as follows. Seems to be required for maximal rate of protein biosynthesis. Enhances ribosome dissociation into subunits and stabilizes the binding of the initiator Met-tRNA(I) to 40 S ribosomal subunits. This chain is Translation initiation factor 1A (eIF1A), found in Thermoplasma volcanium (strain ATCC 51530 / DSM 4299 / JCM 9571 / NBRC 15438 / GSS1).